The primary structure comprises 210 residues: Glutathione S-transferase P 2 (210 aa).

The region spanning 2–81 is the GST N-terminal domain; that stretch reads PPYTIVYFPS…HLGRSLGLYG (80 aa). Glutathione-binding positions include Y8, R14, W39, K45, 52–53, and 65–66; these read QL and QS. The 122-residue stretch at 83 to 204 folds into the GST C-terminal domain; that stretch reads NQREAAQVDM…SSPEHVNRPI (122 aa).

It belongs to the GST superfamily. Pi family. Homodimer. Selectively expressed in gall bladder, colon, heart, and skeletal muscle.

It carries out the reaction RX + glutathione = an S-substituted glutathione + a halide anion + H(+). Functionally, conjugation of reduced glutathione to a wide number of exogenous and endogenous hydrophobic electrophiles. Cannot metabolize 1-chloro-2,4-dinitrobenzene. The sequence is that of Glutathione S-transferase P 2 (Gstp2) from Mus musculus (Mouse).